Reading from the N-terminus, the 88-residue chain is Small ribosomal subunit protein bS16 (88 aa).

The protein belongs to the bacterial ribosomal protein bS16 family.

In Sorangium cellulosum (strain So ce56) (Polyangium cellulosum (strain So ce56)), this protein is Small ribosomal subunit protein bS16.